The following is a 732-amino-acid chain: MERQVLLSEPEEAAALYRGLSRQPALSAACLGPEVTTQYGGQYRTVHTEWTQRDLERMENIRFCRQYLVFHDGDSVVFAGPAGNSVETRGELLSRESPSGTMKAVLRKAGGTGPGEEKQFLEVWEKNRKLKSFNLSALEKHGPVYEDDCFGCLSWSHSETHLLYVAEKKRPKAESFFQTKALDVSASDDEIARLKKPDQAIKGDQFVFYEDWGENMVSKSIPVLCVLDVESGNISVLEGVPENVSPGQAFWAPGDAGVVFVGWWHEPFRLGIRFCTNRRSALYYVDLIGGKCELLSDDSLAVSSPRLSPDQCRIVYLQYPSLIPHHQCSQLCLYDWYTKVTSVVVDVVPRQLGENFSGIYCSLLPLGCWSADSQRVVFDSAQRSRQDLFAVDTQVGTVTSLTAGGSGGSWKLLTIDQDLMVAQFSTPSLPPTLKVGFLPSAGKEQSVLWVSLEEAEPIPDIHWGIRVLQPPPEQENVQYAGLDFEAILLQPGSPPDKTQVPMVVMPHGGPHSSFVTAWMLFPAMLCKMGFAVLLVNYRGSTGFGQDSILSLPGNVGHQDVKDVQFAVEQVLQEEHFDASHVALMGGSHGGFISCHLIGQYPETYRACVARNPVINIASMLGSTDIPDWCVVEAGFPFSSDCLPDLSVWAEMLDKSPIRYIPQVKTPLLLMLGQEDRRVPFKQGMEYYRALKTRNVPVRLLLYPKSTHALSEVEVESDSFMNAVLWLRTHLGS.

M1 carries the N-acetylmethionine modification. Phosphoserine is present on residues S185 and S187. Residues S587, D675, and H707 each act as charge relay system in the active site.

In terms of assembly, homotetramer. In terms of tissue distribution, expressed in erythrocytes (at protein level).

Its subcellular location is the cytoplasm. It carries out the reaction Cleavage of an N-acetyl or N-formyl amino acid from the N-terminus of a polypeptide.. Its activity is regulated as follows. Homotetramerization is required for activity. Tetramerization results in the formation of a gated channel which is involved in substrate selection and substrate access to the catalytic sites. Its function is as follows. This enzyme catalyzes the hydrolysis of the N-terminal peptide bond of an N-acetylated peptide to generate an N-acetylated amino acid and a peptide with a free N-terminus. It preferentially cleaves off Ac-Ala, Ac-Met and Ac-Ser. Also, involved in the degradation of oxidized and glycated proteins. The protein is Acylamino-acid-releasing enzyme (APEH) of Homo sapiens (Human).